The sequence spans 475 residues: 3-isopropylmalate dehydratase large subunit (475 aa).

Residues Cys353, Cys414, and Cys417 each contribute to the [4Fe-4S] cluster site.

It belongs to the aconitase/IPM isomerase family. LeuC type 1 subfamily. In terms of assembly, heterodimer of LeuC and LeuD. It depends on [4Fe-4S] cluster as a cofactor.

The enzyme catalyses (2R,3S)-3-isopropylmalate = (2S)-2-isopropylmalate. It functions in the pathway amino-acid biosynthesis; L-leucine biosynthesis; L-leucine from 3-methyl-2-oxobutanoate: step 2/4. Functionally, catalyzes the isomerization between 2-isopropylmalate and 3-isopropylmalate, via the formation of 2-isopropylmaleate. The chain is 3-isopropylmalate dehydratase large subunit from Stutzerimonas stutzeri (strain A1501) (Pseudomonas stutzeri).